Consider the following 530-residue polypeptide: Type 2 DNA topoisomerase 6 subunit B (530 aa).

ATP-binding positions include N42, D76, 97–98, 106–113, and K427; these read SK and GMYGLGVK.

This sequence belongs to the TOP6B family. In terms of assembly, homodimer. Heterotetramer of two Top6A and two Top6B chains.

It carries out the reaction ATP-dependent breakage, passage and rejoining of double-stranded DNA.. Functionally, relaxes both positive and negative superturns and exhibits a strong decatenase activity. This chain is Type 2 DNA topoisomerase 6 subunit B, found in Saccharolobus islandicus (strain M.16.4 / Kamchatka #3) (Sulfolobus islandicus).